We begin with the raw amino-acid sequence, 397 residues long: Probable N-succinyldiaminopimelate aminotransferase DapC (397 aa).

Pyridoxal 5'-phosphate is bound by residues 109-110 and 218-222; these read GS and DGMAE. Lysine 232 bears the N6-(pyridoxal phosphate)lysine mark.

It belongs to the class-III pyridoxal-phosphate-dependent aminotransferase family. In terms of assembly, homodimer. Requires pyridoxal 5'-phosphate as cofactor.

Its subcellular location is the cytoplasm. It carries out the reaction N-succinyl-(2S,6S)-2,6-diaminopimelate + 2-oxoglutarate = (S)-2-succinylamino-6-oxoheptanedioate + L-glutamate. Its pathway is amino-acid biosynthesis; L-lysine biosynthesis via DAP pathway; LL-2,6-diaminopimelate from (S)-tetrahydrodipicolinate (succinylase route): step 2/3. In terms of biological role, involved in the lysine biosynthetic pathways. It catalyzes the transfer of an amino group from L-glutamate to N-succinyl-2-l-amino-6-oxoheptanedioate (N-succinyl-2-l-amino-6-ketopimelate) in a PLP-dependent reaction, yielding as products N-succinyl-l-2,6-diaminoheptanedioate (N-succinyl-diaminopimelate) and 2-oxoglutarate. This is Probable N-succinyldiaminopimelate aminotransferase DapC (dapC) from Mycobacterium tuberculosis (strain CDC 1551 / Oshkosh).